A 207-amino-acid polypeptide reads, in one-letter code: ATP synthase subunit 5, mitochondrial (207 aa).

It belongs to the ATPase delta chain family. In terms of assembly, F-type ATPases have 2 components, CF(1) - the catalytic core - and CF(0) - the membrane proton channel. CF(1) has five subunits: alpha(3), beta(3), gamma(1), delta(1), epsilon(1). CF(0) has three main subunits: a, b and c.

Its subcellular location is the mitochondrion. It localises to the mitochondrion inner membrane. Mitochondrial membrane ATP synthase (F(1)F(0) ATP synthase or Complex V) produces ATP from ADP in the presence of a proton gradient across the membrane which is generated by electron transport complexes of the respiratory chain. F-type ATPases consist of two structural domains, F(1) - containing the extramembraneous catalytic core and F(0) - containing the membrane proton channel, linked together by a central stalk and a peripheral stalk. During catalysis, ATP synthesis in the catalytic domain of F(1) is coupled via a rotary mechanism of the central stalk subunits to proton translocation. Part of the complex F(0) domain and the peripheric stalk, which acts as a stator to hold the catalytic alpha(3)beta(3) subcomplex and subunit a/ATP6 static relative to the rotary elements. This Eremothecium gossypii (strain ATCC 10895 / CBS 109.51 / FGSC 9923 / NRRL Y-1056) (Yeast) protein is ATP synthase subunit 5, mitochondrial (ATP5).